The sequence spans 157 residues: MADKKEPKITVAAENRKARFNYAIEDTIEAGIALTGTEVKSIRSGKSTIAESYADSRDGEIWLINANIPEYLQANRFNHEPKRPRKLLLHRKQINKLMGAVEREGMTLIPLKLYFNERGRAKLLLAVAKGKKLHDKRESEKKRDWGREKGRLLRARG.

The interval 133 to 157 (LHDKRESEKKRDWGREKGRLLRARG) is disordered. Basic and acidic residues predominate over residues 135 to 151 (DKRESEKKRDWGREKGR).

This sequence belongs to the SmpB family.

It localises to the cytoplasm. Required for rescue of stalled ribosomes mediated by trans-translation. Binds to transfer-messenger RNA (tmRNA), required for stable association of tmRNA with ribosomes. tmRNA and SmpB together mimic tRNA shape, replacing the anticodon stem-loop with SmpB. tmRNA is encoded by the ssrA gene; the 2 termini fold to resemble tRNA(Ala) and it encodes a 'tag peptide', a short internal open reading frame. During trans-translation Ala-aminoacylated tmRNA acts like a tRNA, entering the A-site of stalled ribosomes, displacing the stalled mRNA. The ribosome then switches to translate the ORF on the tmRNA; the nascent peptide is terminated with the 'tag peptide' encoded by the tmRNA and targeted for degradation. The ribosome is freed to recommence translation, which seems to be the essential function of trans-translation. The polypeptide is SsrA-binding protein (Bradyrhizobium sp. (strain BTAi1 / ATCC BAA-1182)).